Here is a 108-residue protein sequence, read N- to C-terminus: Putative septation protein SpoVG (108 aa).

The segment at 84–108 is disordered; sequence FEKQSSVETEPVTEENMETAENENE. Residues 94 to 108 show a composition bias toward acidic residues; the sequence is PVTEENMETAENENE.

It belongs to the SpoVG family.

Its function is as follows. Could be involved in septation. This is Putative septation protein SpoVG from Finegoldia magna (strain ATCC 29328 / DSM 20472 / WAL 2508) (Peptostreptococcus magnus).